Reading from the N-terminus, the 388-residue chain is Gastricsin (388 aa).

The signal sequence occupies residues 1–16 (MKWMVVVLVCLQLLEA). A propeptide spans 17–59 (AVVKVPLKKFKSIRETMKEKGLLGEFLRTHKYDPAWKYRFGDL) (activation peptide). The Peptidase A1 domain maps to 73–385 (YFGEISIGTP…DLGNNRVGFA (313 aa)). Aspartate 91 is an active-site residue. Intrachain disulfides connect cysteine 104/cysteine 109 and cysteine 267/cysteine 271. Aspartate 276 is a catalytic residue. Cysteine 310 and cysteine 343 are oxidised to a cystine.

The protein belongs to the peptidase A1 family.

It localises to the secreted. The catalysed reaction is More restricted specificity than pepsin A, but shows preferential cleavage at Tyr-|-Xaa bonds. High activity on hemoglobin.. Hydrolyzes a variety of proteins. This chain is Gastricsin (PGC), found in Homo sapiens (Human).